Reading from the N-terminus, the 967-residue chain is Zinc finger protein with KRAB and SCAN domains 2 (967 aa).

A Glycyl lysine isopeptide (Lys-Gly) (interchain with G-Cter in SUMO2) cross-link involves residue lysine 22. The SCAN box domain occupies 45–127; it reads RKCFRQFCYE…ALVVHLEKET (83 aa). A disordered region spans residues 150-205; that stretch reads WEVADFQPEQVETQPRAVSREEPGSLHSGHQEQLNRKRERRPLPKNARPSPWVPAL. The span at 167 to 185 shows a compositional bias: basic and acidic residues; it reads VSREEPGSLHSGHQEQLNR. The region spanning 229 to 300 is the KRAB domain; sequence VKDVHVARGF…GLHSSNKRSI (72 aa). Glycyl lysine isopeptide (Lys-Gly) (interchain with G-Cter in SUMO2) cross-links involve residues lysine 242, lysine 259, lysine 277, lysine 337, lysine 482, and lysine 529. A compositionally biased stretch (low complexity) spans 586–602; it reads RASAPSPSTPEEVPSPS. The interval 586 to 626 is disordered; it reads RASAPSPSTPEEVPSPSRQERGGIEVEPQEPTGWEPEETSQ. Serine 591 and serine 600 each carry phosphoserine. Glycyl lysine isopeptide (Lys-Gly) (interchain with G-Cter in SUMO2) cross-links involve residues lysine 734, lysine 745, and lysine 752. 6 consecutive C2H2-type zinc fingers follow at residues 775–797, 803–825, 831–853, 859–881, 887–909, and 915–937; these read YKCGVCGKCFGRSRSLIRHQRIH, FKCLDCGKSFNDSSNFGAHQRIH, YRCGECGKCFSQSSSLIIHQRTH, YQCGECGKSFTNSSHFSAHRRVH, YKCVDCEKSFNNCTRFREHRRIH, and YGCAQCGKRFSKSSVLTKHREVH. The segment at 941-967 is disordered; the sequence is KPLPHPPSLYCPENPHKGKTDEFRKTF. A compositionally biased stretch (basic and acidic residues) spans 954–967; sequence NPHKGKTDEFRKTF.

It belongs to the krueppel C2H2-type zinc-finger protein family.

It is found in the nucleus. In terms of biological role, may be involved in transcriptional regulation. The polypeptide is Zinc finger protein with KRAB and SCAN domains 2 (ZKSCAN2) (Homo sapiens (Human)).